Reading from the N-terminus, the 356-residue chain is ADP-ribosylhydrolase ARH3 (356 aa).

Asp-26, Glu-33, Thr-62, Asp-63, and Asp-64 together coordinate Mg(2+). Asp-63 lines the substrate pocket. Substrate is bound by residues 132 to 138 (KGSYGNG), His-168, and Ile-260. The Mg(2+) site is built by Asp-303, Asp-305, and Thr-306.

The protein belongs to the ADP-ribosylglycohydrolase family. Monomer. The cofactor is Mg(2+). It depends on Mn(2+) as a cofactor.

Its subcellular location is the nucleus. The protein resides in the cytoplasm. It localises to the chromosome. The protein localises to the mitochondrion matrix. The catalysed reaction is [(1''-&gt;2')-ADP-alpha-D-ribose](n) + H2O = [(1''-&gt;2')-ADP-alpha-D-ribose](n-1) + ADP-D-ribose. It carries out the reaction 1''-O-acetyl-ADP-alpha-D-ribose + H2O = ADP-D-ribose + acetate + H(+). The enzyme catalyses O-(ADP-D-ribosyl)-L-seryl-[protein] + H2O = ADP-D-ribose + L-seryl-[protein]. It catalyses the reaction alpha-NAD(+) + H2O = ADP-D-ribose + nicotinamide + H(+). Its activity is regulated as follows. The protein undergoes a dramatic conformational switch from closed to open states upon substrate-binding, which enables specific substrate recognition for the 1''-O-linkage. The glutamate flap (Glu-33) blocks substrate entrance to Mg(2+) in the unliganded closed state. In presence of substrate, Glu-33 is ejected from the active site: this closed-to-open transition significantly widens the substrate-binding channel and precisely positions the scissile 1''-O-linkage for cleavage while securing tightly 2'- and 3'-hydroxyls of ADP-ribose. Activity is inhibited by calcium. Functionally, ADP-ribosylhydrolase that preferentially hydrolyzes the scissile alpha-O-linkage attached to the anomeric C1'' position of ADP-ribose and acts on different substrates, such as proteins ADP-ribosylated on serine and threonine, free poly(ADP-ribose) and O-acetyl-ADP-D-ribose. Specifically acts as a serine mono-ADP-ribosylhydrolase by mediating the removal of mono-ADP-ribose attached to serine residues on proteins, thereby playing a key role in DNA damage response. Serine ADP-ribosylation of proteins constitutes the primary form of ADP-ribosylation of proteins in response to DNA damage. Does not hydrolyze ADP-ribosyl-arginine, -cysteine, -diphthamide, or -asparagine bonds. Also able to degrade protein free poly(ADP-ribose), which is synthesized in response to DNA damage: free poly(ADP-ribose) acts as a potent cell death signal and its degradation by ADPRHL2 protects cells from poly(ADP-ribose)-dependent cell death, a process named parthanatos. Also hydrolyzes free poly(ADP-ribose) in mitochondria. Specifically digests O-acetyl-ADP-D-ribose, a product of deacetylation reactions catalyzed by sirtuins. Specifically degrades 1''-O-acetyl-ADP-D-ribose isomer, rather than 2''-O-acetyl-ADP-D-ribose or 3''-O-acetyl-ADP-D-ribose isomers. The polypeptide is ADP-ribosylhydrolase ARH3 (adprs) (Latimeria chalumnae (Coelacanth)).